The primary structure comprises 420 residues: Tryptophan--tRNA ligase (420 aa).

The 'HIGH' region motif lies at Pro72–His80. Residues Lys308–Ser312 carry the 'KMSKS' region motif.

Belongs to the class-I aminoacyl-tRNA synthetase family.

It localises to the cytoplasm. It catalyses the reaction tRNA(Trp) + L-tryptophan + ATP = L-tryptophyl-tRNA(Trp) + AMP + diphosphate + H(+). The sequence is that of Tryptophan--tRNA ligase from Archaeoglobus fulgidus (strain ATCC 49558 / DSM 4304 / JCM 9628 / NBRC 100126 / VC-16).